The sequence spans 361 residues: [LysW]-lysine hydrolase (361 aa).

Zn(2+) is bound at residue histidine 67. Residue aspartate 69 is part of the active site. Aspartate 91 is a Zn(2+) binding site. The active-site Proton acceptor is the glutamate 124. Zn(2+) contacts are provided by glutamate 125, glutamate 148, and histidine 326.

Belongs to the peptidase M20A family. LysK subfamily. In terms of assembly, homotetramer and homooctamer. Requires Zn(2+) as cofactor. Co(2+) is required as a cofactor.

The protein localises to the cytoplasm. It catalyses the reaction [amino-group carrier protein]-C-terminal-gamma-(L-lysyl)-L-glutamate + H2O = [amino-group carrier protein]-C-terminal-L-glutamate + L-lysine. The protein operates within amino-acid biosynthesis; L-lysine biosynthesis via AAA pathway; L-lysine from L-alpha-aminoadipate (Thermus route): step 5/5. Functionally, catalyzes the release of L-lysine from [LysW]-gamma-L-lysine. In vitro, can deacetylate both N(2)-acetyl-L-lysine and N(2)-acetyl-L-ornithine. This chain is [LysW]-lysine hydrolase, found in Thermus thermophilus (strain ATCC BAA-163 / DSM 7039 / HB27).